Reading from the N-terminus, the 162-residue chain is Peroxiredoxin-2C (162 aa).

The region spanning valine 4–leucine 162 is the Thioredoxin domain. Residue cysteine 51 is the Cysteine sulfenic acid (-SOH) intermediate of the active site.

Belongs to the peroxiredoxin family. Prx5 subfamily. Monomer.

The protein localises to the cytoplasm. The catalysed reaction is [glutaredoxin]-dithiol + a hydroperoxide = [glutaredoxin]-disulfide + an alcohol + H2O. Reduces hydrogen peroxide and alkyl hydroperoxides with reducing equivalents provided through the thioredoxin or glutaredoxin system. May be involved in intracellular redox signaling. Functionally, thiol-specific peroxidase that catalyzes the reduction of hydrogen peroxide and organic hydroperoxides to water and alcohols, respectively. Plays a role in cell protection against oxidative stress by detoxifying peroxides. The polypeptide is Peroxiredoxin-2C (PRXIIC) (Oryza sativa subsp. japonica (Rice)).